Here is a 439-residue protein sequence, read N- to C-terminus: MGKLRVMSLFSGIGAFEAALRNIGVGYELVGFSEIDKYAVKSFCAIHNVDEQLNFGDVSKIDKKKLPEFDLLVGGSPCQSFSVAGHRKGFEDTRGTLFFQYVETLKEKQPKFFVFENVKGLINHDKGNTLNVMAEAFSEVGYRIDLELLNSKFFNVPQNRERLYIIGIREDLIKNEEWSLDFKRKDILQKGKQRLVELDIKSFNFRWTAQSAATKRLKDLLEEYVDEKYYLNEDKTNSLIKELSTSRLNENLTVEQVGNINPSGNGMNGNVYNSSGLSPTITTNKGEGLKIAVEYSRKSGLGRELAVSHTLSASDWRGLNRNQKQNAVVEVRPVLTPERGEKRQNGRRFKDDGEPAFTVNTIDRHGVAVGEYPKYRIRRLTPLECFRLQAFDDEDFEKAFAAGISNSQLYKQTGNSITVTVLESIFKELIHTYINKESE.

Residues 4 to 436 enclose the SAM-dependent MTase C5-type domain; the sequence is LRVMSLFSGI…KELIHTYINK (433 aa). The active site involves Cys-78.

It belongs to the class I-like SAM-binding methyltransferase superfamily. C5-methyltransferase family. Monomer.

It carries out the reaction a 2'-deoxycytidine in DNA + S-adenosyl-L-methionine = a 5-methyl-2'-deoxycytidine in DNA + S-adenosyl-L-homocysteine + H(+). In terms of biological role, a methyltransferase that methylates the C-1 in the sequence 5'-GGCC-3' and both cytosines in the sequence 5'-CCGG-3'. A methyltransferase that methylates C-3 within the sequence 5'-GGCC-3', C-1 in 5'-CCGG-3' and C-2 in 5'-CCWGG-3'. Modification confers resistance against restriction enzymes that recognize these sequences. In Bacillus phage SPR (Bacteriophage SPR), this protein is Orphan methyltransferase M.SPRI.